The following is a 197-amino-acid chain: MAKNGLVIYILVITLLLDQTSCHASKFKARKHSKRRVKEKDGDLKTQVEKLWREVNALKEMQALQTVCLRGTKFHKKCYLAAEGLKHFHEANEDCISKGGTLVVPRSADEINALRDYGKRSLPGVNDFWLGINDMVAEGKFVDINGLAISFLNWDQAQPNGGKRENCALFSQSAQGKWSDEACHSSKRYICEFTIPQ.

Residues methionine 1–alanine 24 form the signal peptide. 3 cysteine pairs are disulfide-bonded: cysteine 68–cysteine 78, cysteine 95–cysteine 191, and cysteine 167–cysteine 183. The 119-residue stretch at phenylalanine 74–glutamate 192 folds into the C-type lectin domain.

It is found in the secreted. Its function is as follows. Promotes cell adhesion to laminin and fibronectin. This chain is C-type lectin domain family 3 member A (CLEC3A), found in Bos taurus (Bovine).